Here is a 374-residue protein sequence, read N- to C-terminus: Ribonuclease D (374 aa).

The 169-residue stretch at 3 to 171 (YQLITTDDGL…MAIRLVEETT (169 aa)) folds into the 3'-5' exonuclease domain. The HRDC domain maps to 210 to 289 (KGRHLACLQK…AETQTMDAAE (80 aa)).

This sequence belongs to the RNase D family. A divalent metal cation serves as cofactor.

It is found in the cytoplasm. It catalyses the reaction Exonucleolytic cleavage that removes extra residues from the 3'-terminus of tRNA to produce 5'-mononucleotides.. Functionally, exonuclease involved in the 3' processing of various precursor tRNAs. Initiates hydrolysis at the 3'-terminus of an RNA molecule and releases 5'-mononucleotides. This Musicola paradisiaca (strain Ech703) (Dickeya paradisiaca) protein is Ribonuclease D.